Here is a 1742-residue protein sequence, read N- to C-terminus: Unconventional myosin-Vc (1742 aa).

Ala2 is subject to N-acetylalanine. One can recognise a Myosin N-terminal SH3-like domain in the interval 8-62 (TQYNRVWIPDPEEVWKSAEIAKDYRVGDKVLRLLLEDGTELDYSVNPESLPPLRN). In terms of domain architecture, Myosin motor spans 67–753 (VGENDLTALS…QVAYLEKLRL (687 aa)). 161-168 (GESGAGKT) contacts ATP. The tract at residues 632–654 (LYLLMETLNATTPHYVRCIKPND) is actin-binding. IQ domains lie at 756 to 779 (LRQS…FLRE), 780 to 806 (RRAA…VALK), 807 to 829 (EAWA…LYQL), 830 to 854 (IRMA…RKML), and 855 to 884 (EEHK…FVLN). The stretch at 884 to 1351 (NIQLTYRVQR…SKTIGKANDV (468 aa)) forms a coiled coil. Positions 1421-1697 (NSTINGIKQV…VRKVQALLNS (277 aa)) constitute a Dilute domain.

The protein belongs to the TRAFAC class myosin-kinesin ATPase superfamily. Myosin family. As to expression, expressed chiefly in non-neuronal tissues. Particularly abundant in epithelial and glandular tissues including pancreas, prostate, mammary, stomach, colon and lung.

Functionally, may be involved in transferrin trafficking. Likely to power actin-based membrane trafficking in many physiologically crucial tissues. The polypeptide is Unconventional myosin-Vc (MYO5C) (Homo sapiens (Human)).